Reading from the N-terminus, the 424-residue chain is MSNTQPFFSQPLAERDAPVRSAILKELERQQSQVELIASENIVSRAVLEAQGSVLTNKYAEGYPGKRYYGGCEFADEVEALAIDRVKQIFNAGYANVQPHSGAQANGSVMLALAKPGDTVLGMSLDAGGHLTHGAKPALSGKWFNAVQYGVNRDTMLIDYDQVEALAHEHKPNLIIAGFSAYPRALDFARFRAIADSVGAKLMVDMAHIAGVIAAGRHANPVEHAHVVTSTTHKTLRGPRGGFVLTNDEDIAKKINSAVFPGLQGGPLMHVIAGKAVAFGEVLQADFKTYIDNVLANAQALGEVLKAGGVDLVTGGTDNHLLLVDLRPKGLKGAPVEQALERAGITCNKNGIPFDTEKPTVTSGIRLGTPAGTTRGFGVAEFREVGRLILEVFDALRANPEGDHATEQRVRREIFALCERFPIY.

Residues Leu125 and 129–131 each bind (6S)-5,6,7,8-tetrahydrofolate; that span reads GHL. At Lys234 the chain carries N6-(pyridoxal phosphate)lysine.

This sequence belongs to the SHMT family. As to quaternary structure, homodimer. The cofactor is pyridoxal 5'-phosphate.

The protein localises to the cytoplasm. It catalyses the reaction (6R)-5,10-methylene-5,6,7,8-tetrahydrofolate + glycine + H2O = (6S)-5,6,7,8-tetrahydrofolate + L-serine. Its pathway is one-carbon metabolism; tetrahydrofolate interconversion. It functions in the pathway amino-acid biosynthesis; glycine biosynthesis; glycine from L-serine: step 1/1. Its function is as follows. Catalyzes the reversible interconversion of serine and glycine with tetrahydrofolate (THF) serving as the one-carbon carrier. This reaction serves as the major source of one-carbon groups required for the biosynthesis of purines, thymidylate, methionine, and other important biomolecules. Also exhibits THF-independent aldolase activity toward beta-hydroxyamino acids, producing glycine and aldehydes, via a retro-aldol mechanism. The chain is Serine hydroxymethyltransferase 1 from Burkholderia lata (strain ATCC 17760 / DSM 23089 / LMG 22485 / NCIMB 9086 / R18194 / 383).